An 85-amino-acid polypeptide reads, in one-letter code: Toxin BmKT (85 aa).

Residues 1–19 (MNYLVFFSLALLLMTGVES) form the signal peptide. One can recognise an LCN-type CS-alpha/beta domain in the interval 21–83 (RDGYIADDKN…VPIRVPGKCN (63 aa)). 4 disulfide bridges follow: cysteine 31–cysteine 82, cysteine 35–cysteine 55, cysteine 41–cysteine 65, and cysteine 45–cysteine 67.

Belongs to the long (4 C-C) scorpion toxin superfamily. Sodium channel inhibitor family. Alpha subfamily. As to expression, expressed by the venom gland.

It is found in the secreted. Its function is as follows. Binds to sodium channels (Nav) and inhibits the inactivation of the activated channels, thereby blocking neuronal transmission. Tested on mice, has antitumor effect and strong inhibitory effect on pain. This is Toxin BmKT from Olivierus martensii (Manchurian scorpion).